The sequence spans 1430 residues: Transport and Golgi organization protein 1 (1430 aa).

The first 34 residues, 1–34 (MRLTNEKATMQPQLSDLALVLGLLICCLPTLTWA), serve as a signal peptide directing secretion. At 35 to 796 (ATLSDKRLCA…ADKLVDHSQL (762 aa)) the chain is on the extracellular side. In terms of domain architecture, SH3 spans 50-112 (QIISMGIAKI…NKDFIMEKKI (63 aa)). 5 disordered regions span residues 253 to 272 (QEEP…PPLP), 284 to 303 (DFDY…SQDN), 318 to 362 (ESIE…SLPT), 445 to 524 (SDAE…DQQK), and 568 to 673 (EEAE…TDNH). The span at 284 to 296 (DFDYGDDETDDDS) shows a compositional bias: acidic residues. Composition is skewed to basic and acidic residues over residues 331–357 (KKTD…KQED), 497–524 (LQEE…DQQK), and 568–588 (EEAE…RSSE). Residues 494-620 (YKQLQEEQEK…QSNEIVDNNN (127 aa)) adopt a coiled-coil conformation. The span at 594–621 (LSVQEANMQQLNDSVDSQSNEIVDNNNR) shows a compositional bias: polar residues. Over residues 640–651 (HPSTASHTTPTP) the composition is skewed to low complexity. A helical transmembrane segment spans residues 797 to 817 (LLCVVIAAISSLFFMFAYYCF). The Cytoplasmic portion of the chain corresponds to 818-1430 (CNSSQEGALL…SATSRPYSEV (613 aa)). Phosphoserine occurs at positions 865 and 868. A coiled-coil region spans residues 869-1245 (NDMVADLKKQ…SLRRKLTTMA (377 aa)). The segment covering 1105-1114 (SQLQQSSQDV) has biased composition (low complexity). Disordered stretches follow at residues 1105–1126 (SQLQ…QSER) and 1312–1430 (LPPT…YSEV). Over residues 1115-1126 (EQLKQDFNQSER) the composition is skewed to basic and acidic residues. A compositionally biased stretch (pro residues) spans 1321-1334 (RPPPLGRMRSPPPS). Positions 1336-1346 (RGDRDRERYSD) are enriched in basic and acidic residues. Residues Ser1345 and Ser1348 each carry the phosphoserine modification. A compositionally biased stretch (acidic residues) spans 1348-1361 (SDYDDYDDDEEDDR). The segment covering 1364-1380 (DRRRRHSGSWGRRHRGS) has biased composition (basic residues). Positions 1387–1402 (TYRSLSPSDSRYNYND) are enriched in polar residues. Phosphoserine occurs at positions 1390 and 1392. The segment covering 1408 to 1417 (SPPPSPPPVP) has biased composition (pro residues). Polar residues predominate over residues 1420–1430 (RSATSRPYSEV).

It belongs to the MIA/OTOR family. Tango1 subfamily.

It localises to the golgi apparatus membrane. Its subcellular location is the golgi apparatus. It is found in the trans-Golgi network. Its function is as follows. Required for protein secretion. May participate in cargo loading by binding to COPII coat subunits and guiding SH3-bound proteins into a growing carrier. At basal transitional ER sites in follicle epithelial cells, mediates the exit of basal membrane protein such as vkg, LanB1 and Trol, from the endoplasmic reticulum (ER) to basal Golgi clusters. The protein is Transport and Golgi organization protein 1 of Drosophila melanogaster (Fruit fly).